The chain runs to 713 residues: Methionine--tRNA ligase (713 aa).

The 'HIGH' region signature appears at 17-27 (PYANGPIHIGH). Residues cysteine 149, cysteine 152, cysteine 162, and cysteine 165 each contribute to the Zn(2+) site. The 'KMSKS' region motif lies at 345–349 (KLSTS). An ATP-binding site is contributed by threonine 348. The interval 530 to 564 (VRTSTPDDDPAGAVGWEDAGAPLLPAGHPIPSGPD) is disordered. The tRNA-binding domain maps to 614-713 (DFTQLDLRAG…TEAEDGSVVR (100 aa)).

It belongs to the class-I aminoacyl-tRNA synthetase family. MetG type 1 subfamily. Homodimer. Requires Zn(2+) as cofactor.

It localises to the cytoplasm. It catalyses the reaction tRNA(Met) + L-methionine + ATP = L-methionyl-tRNA(Met) + AMP + diphosphate. Functionally, is required not only for elongation of protein synthesis but also for the initiation of all mRNA translation through initiator tRNA(fMet) aminoacylation. This chain is Methionine--tRNA ligase, found in Salinibacter ruber (strain DSM 13855 / M31).